The primary structure comprises 350 residues: S-adenosylmethionine:tRNA ribosyltransferase-isomerase (350 aa).

This sequence belongs to the QueA family. Monomer.

The protein localises to the cytoplasm. It carries out the reaction 7-aminomethyl-7-carbaguanosine(34) in tRNA + S-adenosyl-L-methionine = epoxyqueuosine(34) in tRNA + adenine + L-methionine + 2 H(+). Its pathway is tRNA modification; tRNA-queuosine biosynthesis. In terms of biological role, transfers and isomerizes the ribose moiety from AdoMet to the 7-aminomethyl group of 7-deazaguanine (preQ1-tRNA) to give epoxyqueuosine (oQ-tRNA). The chain is S-adenosylmethionine:tRNA ribosyltransferase-isomerase from Vibrio vulnificus (strain YJ016).